The primary structure comprises 117 residues: Putative iron-sulfur cluster insertion protein ErpA (117 aa).

3 residues coordinate iron-sulfur cluster: C45, C109, and C111.

Belongs to the HesB/IscA family. Homodimer. Iron-sulfur cluster serves as cofactor.

Required for insertion of 4Fe-4S clusters. In Methylobacillus flagellatus (strain ATCC 51484 / DSM 6875 / VKM B-1610 / KT), this protein is Putative iron-sulfur cluster insertion protein ErpA.